Here is a 456-residue protein sequence, read N- to C-terminus: Glycine receptor subunit alpha-4 (456 aa).

Residues 1-27 (MTTLVPASLFLLLWTLPGKVLLSVALA) form the signal peptide. Residues 28-256 (KEDVKSGLKG…KFHLERQMGY (229 aa)) lie on the Extracellular side of the membrane. The N-linked (GlcNAc...) asparagine glycan is linked to asparagine 71. Intrachain disulfides connect cysteine 171–cysteine 185 and cysteine 232–cysteine 243. Residue 236-241 (YNTGKF) participates in strychnine binding. Residues 257 to 278 (YLIQMYIPSLLIVILSWVSFWI) form a helical membrane-spanning segment. At 279–283 (NMDAA) the chain is on the cytoplasmic side. The chain crosses the membrane as a helical span at residues 284 to 304 (PARVGLGITTVLTMTTQSSGS). Residues 305–315 (RASLPKVSYVK) lie on the Extracellular side of the membrane. A helical transmembrane segment spans residues 316–336 (AIDIWMAVCLLFVFAALLEYA). Over 337–423 (AVNFVSRQHK…YVDRAKRIDT (87 aa)) the chain is Cytoplasmic. Residues 424-444 (ISRAVFPFTFLVFNIFYWVVY) traverse the membrane as a helical segment. Topologically, residues 445-456 (KVLRSEDIHQAL) are extracellular.

It belongs to the ligand-gated ion channel (TC 1.A.9) family. Glycine receptor (TC 1.A.9.3) subfamily. GLRA4 sub-subfamily. As to quaternary structure, homopentamer (in vitro). Heteropentamer composed of GLRA4 and GLRB. Detected in the retina inner plexiform layer, especially at the border between layer three and four (at protein level).

Its subcellular location is the postsynaptic cell membrane. The protein resides in the synapse. It is found in the perikaryon. The protein localises to the cell projection. It localises to the dendrite. Its subcellular location is the cell membrane. The catalysed reaction is chloride(in) = chloride(out). Inhibited by strychnine. Functionally, glycine receptors are ligand-gated chloride channels. Channel opening is triggered by extracellular glycine. Channel opening is also triggered by taurine and beta-alanine. Plays a role in the down-regulation of neuronal excitability. Contributes to the generation of inhibitory postsynaptic currents. In Mus musculus (Mouse), this protein is Glycine receptor subunit alpha-4 (Glra4).